We begin with the raw amino-acid sequence, 1501 residues long: Neither inactivation nor afterpotential protein C (1501 aa).

Positions 16–282 constitute a Protein kinase domain; sequence FEIYEEIAQG…MVEMVEHPFL (267 aa). ATP contacts are provided by residues 22 to 30 and Lys45; that span reads IAQGVNAKV. Residue Asp145 is the Proton acceptor of the active site. The residue at position 183 (Ser183) is a Phosphoserine. Residues 332–1037 form the Myosin motor domain; it reads MYPEDLAALE…FLARLYELQV (706 aa). An actin-binding region spans residues 913–934; that stretch reads LTLLKMLSQNANLGVHFVRCIR. IQ domains follow at residues 1036-1065 and 1072-1101; these read QVKK…FKLG and HDVA…EKSG. The interval 1043–1271 is interaction with rtp; it reads VQSMMRALLA…RMGESDNIYN (229 aa). The tract at residues 1066-1501 is non alpha-helical, C-terminal domain; that stretch reads KKGPEHHDVA…ITLSGYAVDI (436 aa). Disordered stretches follow at residues 1308–1364 and 1390–1473; these read NWGV…DPVR and KTNY…EDSN. The segment covering 1326 to 1335 has biased composition (pro residues); the sequence is APPPPPPPMP. Residues 1336–1358 are compositionally biased toward low complexity; it reads SSNYYRNNPNQQQRNYQQRSSYP. Residues 1405–1414 are compositionally biased toward basic and acidic residues; it reads NNRRGSDSGD. Residues 1449-1463 are compositionally biased toward polar residues; the sequence is FGQQQRAPTLRQSPA.

The protein in the C-terminal section; belongs to the TRAFAC class myosin-kinesin ATPase superfamily. Myosin family. In the N-terminal section; belongs to the protein kinase superfamily. Ser/Thr protein kinase family. Interacts with rtp. Expressed in the phototransducing compartment of photoreceptor cells, the rhabdomeres (at protein level).

Its subcellular location is the cytoplasm. It is found in the cytoskeleton. The protein localises to the nucleus. The protein resides in the membrane. It localises to the cell projection. Its subcellular location is the rhabdomere membrane. It carries out the reaction L-seryl-[protein] + ATP = O-phospho-L-seryl-[protein] + ADP + H(+). The catalysed reaction is L-threonyl-[protein] + ATP = O-phospho-L-threonyl-[protein] + ADP + H(+). Required for photoreceptor cell function. The ninaC proteins combines putative serine/threonine-protein kinase and myosin activities. Essential for the expression and stability of the rtp protein in the photoreceptors. The rtp/ninaC complex is required for stability of inad and inac and the normal termination of phototransduction in the retina. The sequence is that of Neither inactivation nor afterpotential protein C (ninaC) from Drosophila melanogaster (Fruit fly).